Reading from the N-terminus, the 503-residue chain is Probable cytosol aminopeptidase (503 aa).

K270 and D275 together coordinate Mn(2+). K282 is an active-site residue. Positions 293, 352, and 354 each coordinate Mn(2+). R356 is an active-site residue.

It belongs to the peptidase M17 family. The cofactor is Mn(2+).

It is found in the cytoplasm. It catalyses the reaction Release of an N-terminal amino acid, Xaa-|-Yaa-, in which Xaa is preferably Leu, but may be other amino acids including Pro although not Arg or Lys, and Yaa may be Pro. Amino acid amides and methyl esters are also readily hydrolyzed, but rates on arylamides are exceedingly low.. It carries out the reaction Release of an N-terminal amino acid, preferentially leucine, but not glutamic or aspartic acids.. In terms of biological role, presumably involved in the processing and regular turnover of intracellular proteins. Catalyzes the removal of unsubstituted N-terminal amino acids from various peptides. The chain is Probable cytosol aminopeptidase from Shigella boydii serotype 4 (strain Sb227).